The following is a 275-amino-acid chain: Putative phosphoenolpyruvate synthase regulatory protein (275 aa).

ADP is bound at residue 157–164 (GVSRCGKT).

It belongs to the pyruvate, phosphate/water dikinase regulatory protein family. PSRP subfamily.

It carries out the reaction [pyruvate, water dikinase] + ADP = [pyruvate, water dikinase]-phosphate + AMP + H(+). The catalysed reaction is [pyruvate, water dikinase]-phosphate + phosphate + H(+) = [pyruvate, water dikinase] + diphosphate. In terms of biological role, bifunctional serine/threonine kinase and phosphorylase involved in the regulation of the phosphoenolpyruvate synthase (PEPS) by catalyzing its phosphorylation/dephosphorylation. The chain is Putative phosphoenolpyruvate synthase regulatory protein from Bordetella pertussis (strain Tohama I / ATCC BAA-589 / NCTC 13251).